The following is a 504-amino-acid chain: 26S proteasome non-ATPase regulatory subunit 5 (504 aa).

Ala-2 is modified (N-acetylalanine).

It belongs to the proteasome subunit S5B/HSM3 family. Interacts with PSMC1, PSMC2, PSMD1 and PSMD6. Part of transient complex containing PSMD5, PSMC2, PSMC1 and PSMD2 formed during the assembly of the 26S proteasome.

Its function is as follows. Acts as a chaperone during the assembly of the 26S proteasome, specifically of the base subcomplex of the PA700/19S regulatory complex (RC). In the initial step of the base subcomplex assembly is part of an intermediate PSMD5:PSMC2:PSMC1:PSMD2 module which probably assembles with a PSMD10:PSMC4:PSMC5:PAAF1 module followed by dissociation of PSMD5. This chain is 26S proteasome non-ATPase regulatory subunit 5 (Psmd5), found in Mus musculus (Mouse).